A 156-amino-acid chain; its full sequence is Small ribosomal subunit protein uS7 (156 aa).

The protein belongs to the universal ribosomal protein uS7 family. Part of the 30S ribosomal subunit. Contacts proteins S9 and S11.

Functionally, one of the primary rRNA binding proteins, it binds directly to 16S rRNA where it nucleates assembly of the head domain of the 30S subunit. Is located at the subunit interface close to the decoding center, probably blocks exit of the E-site tRNA. This is Small ribosomal subunit protein uS7 from Nocardioides sp. (strain ATCC BAA-499 / JS614).